The sequence spans 204 residues: UPF0301 protein Mflv_0850 (204 aa).

This sequence belongs to the UPF0301 (AlgH) family.

In Mycolicibacterium gilvum (strain PYR-GCK) (Mycobacterium gilvum (strain PYR-GCK)), this protein is UPF0301 protein Mflv_0850.